The sequence spans 291 residues: G1/S-specific cyclin-D1 (291 aa).

Threonine 282 is modified (phosphothreonine).

The protein belongs to the cyclin family. Cyclin D subfamily. In terms of assembly, interacts with the cdk4 and cdk6 protein kinases to form a serine/threonine kinase holoenzyme complex. The cyclin subunit imparts substrate specificity to the complex. Phosphorylation at Thr-282 by MAP kinases is required for ubiquitination and degradation by the DCX(AMBRA1) complex. In terms of processing, ubiquitinated by the DCX(AMBRA1) complex during the transition from G1 to S cell phase, leading to its degradation. The DCX(AMBRA1) complex represents the major regulator of CCND1 stability during the G1/S transition.

The protein localises to the nucleus. It localises to the cytoplasm. Functionally, regulatory component of the cyclin D1-CDK4 (DC) complex that phosphorylates and inhibits members of the retinoblastoma (RB) protein family including RB1 and regulates the cell-cycle during G(1)/S transition. Phosphorylation of RB1 allows dissociation of the transcription factor E2F from the RB/E2F complex and the subsequent transcription of E2F target genes which are responsible for the progression through the G(1) phase. Hypophosphorylates RB1 in early G(1) phase. Cyclin D-CDK4 complexes are major integrators of various mitogenenic and antimitogenic signals. The polypeptide is G1/S-specific cyclin-D1 (ccnd1) (Xenopus laevis (African clawed frog)).